We begin with the raw amino-acid sequence, 207 residues long: Small ribosomal subunit protein uS4 (207 aa).

Residues 31–51 (KCKLDSKPGQHGRTSGARTSD) are disordered. In terms of domain architecture, S4 RNA-binding spans 97–162 (SRLDNVVYRM…QGRIRESLDL (66 aa)).

Belongs to the universal ribosomal protein uS4 family. Part of the 30S ribosomal subunit. Contacts protein S5. The interaction surface between S4 and S5 is involved in control of translational fidelity.

In terms of biological role, one of the primary rRNA binding proteins, it binds directly to 16S rRNA where it nucleates assembly of the body of the 30S subunit. Its function is as follows. With S5 and S12 plays an important role in translational accuracy. This is Small ribosomal subunit protein uS4 from Bordetella bronchiseptica (strain ATCC BAA-588 / NCTC 13252 / RB50) (Alcaligenes bronchisepticus).